The primary structure comprises 148 residues: 3-dehydroquinate dehydratase (148 aa).

Tyrosine 23 (proton acceptor) is an active-site residue. 3 residues coordinate substrate: asparagine 74, histidine 80, and aspartate 87. Histidine 100 acts as the Proton donor in catalysis. Substrate-binding positions include 101–102 and arginine 111; that span reads IS.

It belongs to the type-II 3-dehydroquinase family. Homododecamer.

The catalysed reaction is 3-dehydroquinate = 3-dehydroshikimate + H2O. The protein operates within metabolic intermediate biosynthesis; chorismate biosynthesis; chorismate from D-erythrose 4-phosphate and phosphoenolpyruvate: step 3/7. Functionally, catalyzes a trans-dehydration via an enolate intermediate. The protein is 3-dehydroquinate dehydratase of Thermoanaerobacter pseudethanolicus (strain ATCC 33223 / 39E) (Clostridium thermohydrosulfuricum).